The sequence spans 307 residues: tRNA pseudouridine synthase B (307 aa).

The active-site Nucleophile is the D48.

The protein belongs to the pseudouridine synthase TruB family. Type 1 subfamily.

The enzyme catalyses uridine(55) in tRNA = pseudouridine(55) in tRNA. In terms of biological role, responsible for synthesis of pseudouridine from uracil-55 in the psi GC loop of transfer RNAs. This Pasteurella multocida (strain Pm70) protein is tRNA pseudouridine synthase B.